We begin with the raw amino-acid sequence, 110 residues long: MSVVIRLARAGTKKRPFYHVVVADSRFPRDGRFIERLGYFNPLMAKDNEARLKLDLDKVKDWLAKGAQPSDRVARFLDITGVKKREARNNPEKAVPRKERKAAAEAAAKK.

The interval 87–110 is disordered; that stretch reads ARNNPEKAVPRKERKAAAEAAAKK.

It belongs to the bacterial ribosomal protein bS16 family.

In Rhodopseudomonas palustris (strain HaA2), this protein is Small ribosomal subunit protein bS16.